A 99-amino-acid chain; its full sequence is High mobility group nucleosome-binding domain-containing protein 3 (99 aa).

Basic and acidic residues-rich tracts occupy residues 1 to 25 and 39 to 53; these read MPKRKSPENTEGKDGTKLTKQEPTR and PESKPRKTSAKKEPG. Positions 1-99 are disordered; it reads MPKRKSPENT…RTESIEKEGE (99 aa). Ser-6 is modified (phosphoserine). Thr-10 carries the phosphothreonine modification. Phosphoserine is present on residues Ser-78 and Ser-93. Basic and acidic residues predominate over residues 83-99; the sequence is TKVEEAQRTESIEKEGE.

The protein belongs to the HMGN family. As to quaternary structure, interacts with the ligand binding domain of the thyroid receptor (TR) (in vitro). Requires the presence of thyroid hormone for its interaction. Interacts with transcriptional regulator SEHBP. Interacts with nucleosomes. As to expression, expressed in the brain, eye, prostate, thyroid, kidney, testis, glial cells and insulin-producing cells of the Langerhans pancreatic islets. In the brain, expressed in the lateral olfactory tract, anterior commissure, corpus callosum, internal capsule, fornix, stria medullans, optic tract, axon bundles, Purkinje cell layer and granular layer of the cerebellum. In retina, expressed in the nuclei of cells in the inner nuclear layer including amacrine, bipolar and horizontal neurons and in the nuclei of ganglion neurons. Detected at low levels in the liver.

It localises to the nucleus. Binds to nucleosomes, regulating chromatin structure and consequently, chromatin-dependent processes such as transcription, DNA replication and DNA repair. Affects both insulin and glucagon levels and modulates the expression of pancreatic genes involved in insulin secretion. Regulates the expression of the glucose transporter SLC2A2 by binding specifically to its promoter region and recruiting PDX1 and additional transcription factors. Regulates the expression of SLC6A9, a glycine transporter which regulates the glycine concentration in synaptic junctions in the central nervous system, by binding to its transcription start site. May play a role in ocular development and astrocyte function. This Mus musculus (Mouse) protein is High mobility group nucleosome-binding domain-containing protein 3 (Hmgn3).